A 475-amino-acid chain; its full sequence is Aspartyl/glutamyl-tRNA(Asn/Gln) amidotransferase subunit B (475 aa).

The protein belongs to the GatB/GatE family. GatB subfamily. As to quaternary structure, heterotrimer of A, B and C subunits.

It catalyses the reaction L-glutamyl-tRNA(Gln) + L-glutamine + ATP + H2O = L-glutaminyl-tRNA(Gln) + L-glutamate + ADP + phosphate + H(+). The enzyme catalyses L-aspartyl-tRNA(Asn) + L-glutamine + ATP + H2O = L-asparaginyl-tRNA(Asn) + L-glutamate + ADP + phosphate + 2 H(+). Its function is as follows. Allows the formation of correctly charged Asn-tRNA(Asn) or Gln-tRNA(Gln) through the transamidation of misacylated Asp-tRNA(Asn) or Glu-tRNA(Gln) in organisms which lack either or both of asparaginyl-tRNA or glutaminyl-tRNA synthetases. The reaction takes place in the presence of glutamine and ATP through an activated phospho-Asp-tRNA(Asn) or phospho-Glu-tRNA(Gln). The sequence is that of Aspartyl/glutamyl-tRNA(Asn/Gln) amidotransferase subunit B from Thiobacillus denitrificans (strain ATCC 25259 / T1).